Here is an 840-residue protein sequence, read N- to C-terminus: Homeobox-leucine zipper protein HOX9 (840 aa).

Disordered regions lie at residues 1–26 and 135–160; these read MAAA…AGMD and NPSL…DASN. Residues 12 to 21 show a composition bias toward gly residues; it reads GSDGGGGGYD. The homeobox DNA-binding region spans 26–89; sequence DSGKYVRYTP…NRRCRDKQRK (64 aa). The stretch at 86–135 forms a coiled coil; it reads KQRKEASRLQAVNRKLTAMNKLLMEENERLQKQVSQLVHENAYMKQQLQN. Residues 157-385 form the START domain; sequence DASNPSGLLT…IAQETSGEVV (229 aa).

This sequence belongs to the HD-ZIP homeobox family. Class III subfamily. Expressed in seedlings, roots, stems, leaf sheaths and blades and panicles.

The protein localises to the nucleus. Its function is as follows. Probable transcription factor. The protein is Homeobox-leucine zipper protein HOX9 (HOX9) of Oryza sativa subsp. indica (Rice).